Consider the following 430-residue polypeptide: 3-phosphoshikimate 1-carboxyvinyltransferase (430 aa).

Residues lysine 25, serine 26, and arginine 30 each coordinate 3-phosphoshikimate. Position 25 (lysine 25) interacts with phosphoenolpyruvate. Phosphoenolpyruvate contacts are provided by glycine 98 and arginine 126. Positions 169, 170, 171, 198, 313, and 342 each coordinate 3-phosphoshikimate. Position 171 (glutamine 171) interacts with phosphoenolpyruvate. Glutamate 313 acts as the Proton acceptor in catalysis. Phosphoenolpyruvate is bound by residues arginine 346, arginine 387, and lysine 412.

Belongs to the EPSP synthase family. Monomer.

Its subcellular location is the cytoplasm. It catalyses the reaction 3-phosphoshikimate + phosphoenolpyruvate = 5-O-(1-carboxyvinyl)-3-phosphoshikimate + phosphate. It functions in the pathway metabolic intermediate biosynthesis; chorismate biosynthesis; chorismate from D-erythrose 4-phosphate and phosphoenolpyruvate: step 6/7. Catalyzes the transfer of the enolpyruvyl moiety of phosphoenolpyruvate (PEP) to the 5-hydroxyl of shikimate-3-phosphate (S3P) to produce enolpyruvyl shikimate-3-phosphate and inorganic phosphate. The sequence is that of 3-phosphoshikimate 1-carboxyvinyltransferase from Mycobacterium leprae (strain TN).